A 131-amino-acid chain; its full sequence is Small ribosomal subunit protein uS8 (131 aa).

Belongs to the universal ribosomal protein uS8 family. In terms of assembly, part of the 30S ribosomal subunit. Contacts proteins S5 and S12.

Its function is as follows. One of the primary rRNA binding proteins, it binds directly to 16S rRNA central domain where it helps coordinate assembly of the platform of the 30S subunit. This is Small ribosomal subunit protein uS8 from Bordetella avium (strain 197N).